We begin with the raw amino-acid sequence, 443 residues long: Enolase B (443 aa).

Substrate-binding residues include His156 and Glu165. The active-site Proton donor is Glu208. Mg(2+) is bound by residues Asp243, Glu296, and Asp323. Residues Glu296 and Asp323 each coordinate substrate. The active-site Proton acceptor is the Lys348. Residues Ser375–Ser378 and Lys399 contribute to the substrate site.

Belongs to the enolase family. Homodimer. Requires Mg(2+) as cofactor.

It localises to the cytoplasm. The catalysed reaction is (2R)-2-phosphoglycerate = phosphoenolpyruvate + H2O. It participates in carbohydrate degradation; glycolysis; pyruvate from D-glyceraldehyde 3-phosphate: step 4/5. This Dictyostelium discoideum (Social amoeba) protein is Enolase B (enoB).